The sequence spans 227 residues: UPF0758 protein lpg2489 (227 aa).

An MPN domain is found at 102–225; that stretch reads RLSNTQQTYA…YSIFAENKWV (124 aa). Zn(2+) contacts are provided by His173, His175, and Asp186. A JAMM motif motif is present at residues 173–186; the sequence is HNHPSGLSDASQQD.

The protein belongs to the UPF0758 family.

This is UPF0758 protein lpg2489 from Legionella pneumophila subsp. pneumophila (strain Philadelphia 1 / ATCC 33152 / DSM 7513).